The following is a 167-amino-acid chain: Large ribosomal subunit protein uL10 (167 aa).

It belongs to the universal ribosomal protein uL10 family. Part of the ribosomal stalk of the 50S ribosomal subunit. The N-terminus interacts with L11 and the large rRNA to form the base of the stalk. The C-terminus forms an elongated spine to which L12 dimers bind in a sequential fashion forming a multimeric L10(L12)X complex.

Functionally, forms part of the ribosomal stalk, playing a central role in the interaction of the ribosome with GTP-bound translation factors. This chain is Large ribosomal subunit protein uL10, found in Tolumonas auensis (strain DSM 9187 / NBRC 110442 / TA 4).